A 93-amino-acid polypeptide reads, in one-letter code: Large ribosomal subunit protein uL23cz/uL23cy (93 aa).

This sequence belongs to the universal ribosomal protein uL23 family. As to quaternary structure, part of the 50S ribosomal subunit.

It localises to the plastid. The protein localises to the chloroplast. Binds to 23S rRNA. This Lotus japonicus (Lotus corniculatus var. japonicus) protein is Large ribosomal subunit protein uL23cz/uL23cy (rpl23-A).